Consider the following 377-residue polypeptide: Signal peptide peptidase (377 aa).

Positions 1–27 (MDSALSDPHNGSAEAGGPTNSTTRPPS) are disordered. Residues 1–31 (MDSALSDPHNGSAEAGGPTNSTTRPPSTPEG) lie on the Lumenal side of the membrane. 2 N-linked (GlcNAc...) asparagine glycosylation sites follow: Asn10 and Asn20. The helical transmembrane segment at 32–52 (IALAYGSLLLMALLPIFFGAL) threads the bilayer. Topologically, residues 53–77 (RSVRCARGKNASDMPETITSRDAAR) are cytoplasmic. A helical transmembrane segment spans residues 78–98 (FPIIASCTLLGLYLFFKIFSQ). Residues 99–100 (EY) are Lumenal-facing. A helical membrane pass occupies residues 101-121 (INLLLSMYFFVLGILALSHTI). Over 122–157 (SPFMNKFFPASFPNRQYQLLFTQGSGENKEEIINYE) the chain is Cytoplasmic. The chain crosses the membrane as a helical span at residues 158–178 (FDTKDLVCLGLSSIVGVWYLL). At 179-181 (RKH) the chain is on the lumenal side. A helical transmembrane segment spans residues 182–202 (WIANNLFGLAFSLNGVELLHL). At 203-209 (NNVSTGC) the chain is on the cytoplasmic side. Residues 210 to 230 (ILLGGLFIYDVFWVFGTNVMV) traverse the membrane as a helical segment. The active site involves Asp219. The Lumenal segment spans residues 231 to 256 (TVAKSFEAPIKLVFPQDLLEKGLEAN). Residues 257 to 277 (NFAMLGLGDVVIPGIFIALLL) form a helical membrane-spanning segment. Residue Asp265 is part of the active site. Residues 278–290 (RFDISLKKNTHTY) lie on the Cytoplasmic side of the membrane. Residues 291-311 (FYTSFAAYIFGLGLTIFIMHI) form a helical membrane-spanning segment. Over 312-314 (FKH) the chain is Lumenal. Residues 315–335 (AQPALLYLVPACIGFPVLVAL) form a helical membrane-spanning segment. The PAL motif lies at 317 to 319 (PAL). Topologically, residues 336 to 377 (AKGEVTEMFSYEESNPKDPAAVTESKEGTEASASKGLEKKEK) are cytoplasmic. The tract at residues 345–377 (SYEESNPKDPAAVTESKEGTEASASKGLEKKEK) is disordered. Position 367 is a phosphoserine (Ser367).

This sequence belongs to the peptidase A22B family. As to quaternary structure, monomer. Homodimer. Interacts with RNF139. Interacts with DERL1 and XBP1 isoform 1. Post-translationally, N-glycosylated. In terms of tissue distribution, widely expressed with highest levels in kidney, liver, placenta, lung, leukocytes and small intestine and reduced expression in heart and skeletal muscle. Expressed abundantly in the CNS with highest levels in thalamus and medulla.

The protein localises to the endoplasmic reticulum membrane. Its subcellular location is the membrane. It is found in the cell membrane. Catalyzes intramembrane proteolysis of signal peptides that have been removed from precursors of secretory and membrane proteins, resulting in the release of the fragment from the ER membrane into the cytoplasm. Required to generate lymphocyte cell surface (HLA-E) epitopes derived from MHC class I signal peptides. May be necessary for the removal of the signal peptide that remains attached to the hepatitis C virus core protein after the initial proteolytic processing of the polyprotein. Involved in the intramembrane cleavage of the integral membrane protein PSEN1. Cleaves the integral membrane protein XBP1 isoform 1 in a DERL1/RNF139-dependent manner. May play a role in graft rejection. This Homo sapiens (Human) protein is Signal peptide peptidase.